The primary structure comprises 231 residues: VIGGDECDINEHPFLAFMYYSPRYFCGMTLINQEWVLTAAHCNRRFMRIXXXXHAGSVANYDEVVRXXXXXFICPNKKKNVITDKDIMLIRLDRPVKNSEHIAPLSLPSNPPSVGSVCRIMGWGAITTSEDTYPDVPHCANINLFNNTVCREAYNGLPAKTLCAGVLQGGIDTCGGDSGGPLICNGQFQGILSWGSDPCAEPRKPAFYTKVFDYLPWIQSIIAGNKTATCP.

The Peptidase S1 domain maps to 1 to 223; that stretch reads VIGGDECDIN…YLPWIQSIIA (223 aa). 6 disulfides stabilise this stretch: Cys7-Cys139, Cys26-Cys42, Cys74-Cys230, Cys118-Cys184, Cys150-Cys163, and Cys174-Cys199. Catalysis depends on charge relay system residues His41 and Asp86. N-linked (GlcNAc...) asparagine glycosylation occurs at Asn146. Ser178 acts as the Charge relay system in catalysis. N-linked (GlcNAc...) asparagine glycosylation occurs at Asn225.

Belongs to the peptidase S1 family. Snake venom subfamily. Monomer. Post-translationally, glycosylated. As to expression, expressed by the venom gland.

It is found in the secreted. It carries out the reaction Selective cleavage of Arg-|-Xaa bond in fibrinogen, to form fibrin, and release fibrinopeptide A. The specificity of further degradation of fibrinogen varies with species origin of the enzyme.. Its activity is regulated as follows. Inhibited by PMSF and benzamidine. Its clotting effect is strongly inhibited by antibothropic serum. Is not inhibited by heparin. Thrombin-like snake venom serine protease that cleaves Arg-Gly bonds in alpha-chain of fibrinogen (FGA). Induces temporary episodes of opisthotonos and rapid rolling around the long axis of the animal (gyroxin-like effect), when injected into the tail veins of mice (0.143 ug/g mouse). In Bothrops leucurus (Whitetail lancehead), this protein is Thrombin-like enzyme leucurobin.